Here is a 152-residue protein sequence, read N- to C-terminus: Large-conductance mechanosensitive channel (152 aa).

2 helical membrane-spanning segments follow: residues 14 to 34 (VIDL…VKSL) and 84 to 104 (VGQF…VFLL).

Belongs to the MscL family. In terms of assembly, homopentamer.

The protein resides in the cell inner membrane. Functionally, channel that opens in response to stretch forces in the membrane lipid bilayer. May participate in the regulation of osmotic pressure changes within the cell. This Laribacter hongkongensis (strain HLHK9) protein is Large-conductance mechanosensitive channel.